Reading from the N-terminus, the 216-residue chain is Adenylate kinase (216 aa).

Position 10 to 15 (10 to 15 (GAGKGT)) interacts with ATP. The tract at residues 30–59 (STGDIFRKNISENTPLGIEAKSYMDNGQLV) is NMP. Residues Thr31, Arg36, 57–59 (QLV), 85–88 (GFPR), and Gln92 contribute to the AMP site. An LID region spans residues 126–163 (GRRVCPSCGASYHIKFNPPTNDGKCDLCGSDVIQRKDD). An ATP-binding site is contributed by Arg127. Residues Cys130 and Cys133 each coordinate Zn(2+). Residue 136-137 (SY) coordinates ATP. The Zn(2+) site is built by Cys150 and Cys153. AMP is bound by residues Arg160 and Arg171. Gln199 provides a ligand contact to ATP.

The protein belongs to the adenylate kinase family. In terms of assembly, monomer.

It is found in the cytoplasm. The enzyme catalyses AMP + ATP = 2 ADP. The protein operates within purine metabolism; AMP biosynthesis via salvage pathway; AMP from ADP: step 1/1. Functionally, catalyzes the reversible transfer of the terminal phosphate group between ATP and AMP. Plays an important role in cellular energy homeostasis and in adenine nucleotide metabolism. The polypeptide is Adenylate kinase (Clostridium perfringens (strain ATCC 13124 / DSM 756 / JCM 1290 / NCIMB 6125 / NCTC 8237 / Type A)).